The chain runs to 257 residues: MLLAIDSGNTNTVFAVYDGDAKRGEWRAATNANRTADEMGVWLLQLMTLEGLSQGDIDATIIASVVPATVFNLRMLCHRYFHSPPMVVGEPDVDLGIGILLERPDEVGADRLVNAVAAHETYRGPLIVIDFGTATTFDVVDEEGNYCGGAIAPGVNLSLEALHMASAQLPRVAIGRPRTVIGKATIPAMKSGIYLGYVGLIEGLVKRISEEFGAPMRVIATGGLAPLFAEATDAIQTIDDDLTLRGLLIIHRRNQPD.

ATP is bound at residue 6 to 13 (DSGNTNTV). 108 to 111 (GADR) serves as a coordination point for substrate. Catalysis depends on Asp-110, which acts as the Proton acceptor. Asp-130 is a binding site for K(+). Thr-133 is an ATP binding site. Thr-185 contacts substrate.

The protein belongs to the type III pantothenate kinase family. Homodimer. Requires NH4(+) as cofactor. K(+) serves as cofactor.

It is found in the cytoplasm. It carries out the reaction (R)-pantothenate + ATP = (R)-4'-phosphopantothenate + ADP + H(+). It participates in cofactor biosynthesis; coenzyme A biosynthesis; CoA from (R)-pantothenate: step 1/5. Functionally, catalyzes the phosphorylation of pantothenate (Pan), the first step in CoA biosynthesis. The chain is Type III pantothenate kinase from Rhodospirillum rubrum (strain ATCC 11170 / ATH 1.1.1 / DSM 467 / LMG 4362 / NCIMB 8255 / S1).